Here is a 141-residue protein sequence, read N- to C-terminus: Large ribosomal subunit protein uL11 (141 aa).

Belongs to the universal ribosomal protein uL11 family. Part of the ribosomal stalk of the 50S ribosomal subunit. Interacts with L10 and the large rRNA to form the base of the stalk. L10 forms an elongated spine to which L12 dimers bind in a sequential fashion forming a multimeric L10(L12)X complex. In terms of processing, one or more lysine residues are methylated.

Forms part of the ribosomal stalk which helps the ribosome interact with GTP-bound translation factors. The protein is Large ribosomal subunit protein uL11 of Pediococcus pentosaceus (strain ATCC 25745 / CCUG 21536 / LMG 10740 / 183-1w).